The sequence spans 405 residues: MKRPIYLDYAATTPVDPQVAERMMECLTFDGTFGNAASRSHAYGWQAEEKVEYAREQVANLIKADPREIVWTSGATESDNLALKGVAQFYASKGKHIITSKIEHKAVLDPCRELEEQGFEITYLEPEPQTGLITPEMVKAALRPDTILVSLMMVNNEIGTVTDVAVIGELTRANKTFFHVDAAQAAGKVDIDLSTMKIDLMSFSAHKIYGPKGIGALYVRRSPRVRLKAQIHGGGHERGMRSGTLATHQIVGMGEAFELAGKTMHAEQERIRKLRDKLWNGLQDLEQVFLNGHPTQNVANYLNVSFNFVEGESLMMSLKDAAVSSGSACTSATLEPSYVLRALGLSDELAHSSIRFSFGKYTTEEDIDHVLTITKAAVEKLRELSPLWDMYKEGIDLSTVEWAEH.

Residues 75–76 (AT), Asn156, Gln184, and 204–206 (SAH) each bind pyridoxal 5'-phosphate. The residue at position 207 (Lys207) is an N6-(pyridoxal phosphate)lysine. Thr244 serves as a coordination point for pyridoxal 5'-phosphate. The active-site Cysteine persulfide intermediate is Cys329. Residue Cys329 participates in [2Fe-2S] cluster binding.

This sequence belongs to the class-V pyridoxal-phosphate-dependent aminotransferase family. NifS/IscS subfamily. In terms of assembly, homodimer. Forms a heterotetramer with IscU, interacts with other sulfur acceptors. Pyridoxal 5'-phosphate serves as cofactor.

The protein resides in the cytoplasm. It catalyses the reaction (sulfur carrier)-H + L-cysteine = (sulfur carrier)-SH + L-alanine. Its pathway is cofactor biosynthesis; iron-sulfur cluster biosynthesis. In terms of biological role, master enzyme that delivers sulfur to a number of partners involved in Fe-S cluster assembly, tRNA modification or cofactor biosynthesis. Catalyzes the removal of elemental sulfur atoms from cysteine to produce alanine. Functions as a sulfur delivery protein for Fe-S cluster synthesis onto IscU, an Fe-S scaffold assembly protein, as well as other S acceptor proteins. This is Cysteine desulfurase IscS from Acinetobacter baumannii (strain SDF).